The sequence spans 362 residues: Methylthioribose-1-phosphate isomerase (362 aa).

Residue Asp252 is the Proton donor of the active site.

The protein belongs to the eIF-2B alpha/beta/delta subunits family. MtnA subfamily.

Its subcellular location is the cytoplasm. The protein resides in the nucleus. The enzyme catalyses 5-(methylsulfanyl)-alpha-D-ribose 1-phosphate = 5-(methylsulfanyl)-D-ribulose 1-phosphate. Its pathway is amino-acid biosynthesis; L-methionine biosynthesis via salvage pathway; L-methionine from S-methyl-5-thio-alpha-D-ribose 1-phosphate: step 1/6. Catalyzes the interconversion of methylthioribose-1-phosphate (MTR-1-P) into methylthioribulose-1-phosphate (MTRu-1-P). In Drosophila virilis (Fruit fly), this protein is Methylthioribose-1-phosphate isomerase.